Reading from the N-terminus, the 103-residue chain is Large ribosomal subunit protein uL24 (103 aa).

This sequence belongs to the universal ribosomal protein uL24 family. Part of the 50S ribosomal subunit.

One of two assembly initiator proteins, it binds directly to the 5'-end of the 23S rRNA, where it nucleates assembly of the 50S subunit. Functionally, one of the proteins that surrounds the polypeptide exit tunnel on the outside of the subunit. The chain is Large ribosomal subunit protein uL24 from Dehalococcoides mccartyi (strain ATCC BAA-2100 / JCM 16839 / KCTC 5957 / BAV1).